Reading from the N-terminus, the 403-residue chain is Lipase lipl-5 (403 aa).

The signal sequence occupies residues 1-18; sequence MWRFAVFLAAFFVQDVVG. Residue Asn64 is glycosylated (N-linked (GlcNAc...) asparagine). Ser167 serves as the catalytic Nucleophile. The N-linked (GlcNAc...) asparagine glycan is linked to Asn271. Catalysis depends on charge relay system residues Asp343 and His375.

It belongs to the AB hydrolase superfamily. Lipase family.

The protein resides in the lysosome lumen. Its subcellular location is the secreted. Lipase involved in lipid homeostasis. Regulates mitochondrial lipid composition, in particular cardiolipins and coenzyme Q-9 levels, in response to nutrient availability. Does not affect global triglyceride levels in response to nutrient availability. However, in coelomocytes, specifically promotes triglyceride catabolism and lifespan extension in response to nutrient deprivation. In Caenorhabditis elegans, this protein is Lipase lipl-5.